Consider the following 292-residue polypeptide: Coiled-coil domain-containing protein 192 (292 aa).

The interval 28 to 55 (SVVPESDTSERSSMTSGSSESDIPQENK) is disordered. Residues 38-49 (RSSMTSGSSESD) are compositionally biased toward low complexity. 2 coiled-coil regions span residues 65 to 174 (QMAF…LATA) and 222 to 258 (IMELSTQVSLQTERITQLKEVLEEKERKIQQLEAERS). Over residues 251-267 (QQLEAERSPHPPQEVKD) the composition is skewed to basic and acidic residues. Residues 251–292 (QQLEAERSPHPPQEVKDPPGCLPEAPVFSTHDIPPVVSDENL) form a disordered region.

This Homo sapiens (Human) protein is Coiled-coil domain-containing protein 192.